Here is a 119-residue protein sequence, read N- to C-terminus: Putative arsenical resistance operon repressor ArsR2 (119 aa).

The HTH arsR-type domain maps to V24–E119. Residues V60 to T83 constitute a DNA-binding region (H-T-H motif).

Its function is as follows. Transcriptional repressor for the arsR2M operon. This Halobacterium salinarum (strain ATCC 700922 / JCM 11081 / NRC-1) (Halobacterium halobium) protein is Putative arsenical resistance operon repressor ArsR2 (arsR2).